A 491-amino-acid chain; its full sequence is Galactose-1-phosphate uridylyltransferase 1 (491 aa).

The protein belongs to the galactose-1-phosphate uridylyltransferase type 2 family.

The protein localises to the cytoplasm. The catalysed reaction is alpha-D-galactose 1-phosphate + UDP-alpha-D-glucose = alpha-D-glucose 1-phosphate + UDP-alpha-D-galactose. Its pathway is carbohydrate metabolism; galactose metabolism. This is Galactose-1-phosphate uridylyltransferase 1 (galT1) from Streptococcus pneumoniae serotype 4 (strain ATCC BAA-334 / TIGR4).